Here is a 365-residue protein sequence, read N- to C-terminus: Glycerol dehydrogenase (365 aa).

D37, G94, K95, T116, and S119 together coordinate NAD(+). Residue D121 participates in glycerol binding. The NAD(+) site is built by S125, L127, and Y131. Zn(2+) contacts are provided by D171, H254, and H271. Position 254 (H254) interacts with glycerol.

It belongs to the iron-containing alcohol dehydrogenase family. Requires Zn(2+) as cofactor.

It carries out the reaction glycerol + NAD(+) = dihydroxyacetone + NADH + H(+). Its pathway is polyol metabolism; glycerol fermentation; glycerone phosphate from glycerol (oxidative route): step 1/2. Its function is as follows. Catalyzes the NAD-dependent oxidation of glycerol to dihydroxyacetone (glycerone). Allows microorganisms to utilize glycerol as a source of carbon under anaerobic conditions. This chain is Glycerol dehydrogenase (gldA), found in Pseudomonas putida (Arthrobacter siderocapsulatus).